The chain runs to 144 residues: D-aminoacyl-tRNA deacylase (144 aa).

Positions 136 to 137 match the Gly-cisPro motif, important for rejection of L-amino acids motif; sequence GP.

The protein belongs to the DTD family. In terms of assembly, homodimer.

It localises to the cytoplasm. It catalyses the reaction glycyl-tRNA(Ala) + H2O = tRNA(Ala) + glycine + H(+). The enzyme catalyses a D-aminoacyl-tRNA + H2O = a tRNA + a D-alpha-amino acid + H(+). In terms of biological role, an aminoacyl-tRNA editing enzyme that deacylates mischarged D-aminoacyl-tRNAs. Also deacylates mischarged glycyl-tRNA(Ala), protecting cells against glycine mischarging by AlaRS. Acts via tRNA-based rather than protein-based catalysis; rejects L-amino acids rather than detecting D-amino acids in the active site. By recycling D-aminoacyl-tRNA to D-amino acids and free tRNA molecules, this enzyme counteracts the toxicity associated with the formation of D-aminoacyl-tRNA entities in vivo and helps enforce protein L-homochirality. The protein is D-aminoacyl-tRNA deacylase of Haemophilus influenzae (strain PittEE).